Here is a 141-residue protein sequence, read N- to C-terminus: Succinate dehydrogenase [ubiquinone] cytochrome b small subunit 2 (141 aa).

A mitochondrion-targeting transit peptide spans 1–24; sequence MSLIRCTTSKALKFRQLLKMAART. Residues 25–44 are Mitochondrial matrix-facing; it reads SVTTPVSREPFSIEDHSLHF. A helical transmembrane segment spans residues 45–63; that stretch reads KIERYWAAGMIPLIPTAYF. At 64–68 the chain is on the mitochondrial intermembrane side; the sequence is IHTPA. Residues 69 to 89 traverse the membrane as a helical segment; it reads MDAVLTVAIVLHVHWGIAGVV. Heme b is bound at residue histidine 80. Residues 90 to 104 are Mitochondrial matrix-facing; the sequence is SDYARPFVIGDTLAR. Residue tyrosine 92 coordinates a ubiquinone. A helical transmembrane segment spans residues 105 to 126; sequence VARASVYIITVILLASLLHFNN. Residues 127–141 lie on the Mitochondrial intermembrane side of the membrane; sequence SDVGLTKAFEMVWSL.

This sequence belongs to the CybS family. In terms of assembly, component of the mitochondrial electron transport chain complex II composed of four subunits: a flavoprotein (Fp), an iron-sulfur protein (Ip), and a large cytochrome b (CybL) subunit and a small cytochrome b (CybS) subunit. There are 2 developmental stage-specific forms of complex II which have the Ip and CybL subunits in common. Complex II from the free-living larvae (aerobic environment) acts as a succinate dehydrogenase and is composed of the common subunit Ip and CybL and the stage specific subunits FpL and CybSL. Complex II from parasitic larvae and adults (anaerobic environment) acts as a fumarate reductase and is composed of the common subunit Ip and CybL and the stage specific subunits FpA and CybSA. Heme b is required as a cofactor.

Its subcellular location is the mitochondrion inner membrane. It participates in carbohydrate metabolism; tricarboxylic acid cycle; fumarate from succinate (eukaryal route): step 1/1. In terms of biological role, membrane-bound small subunit (CybS) of the mitochondrial electron transport chain complex II, which together with the membrane-bound large subunit (CybL), anchor the catalytic subunits to the inner mitochondria membrane. During the free-living egg-larvae stages, which occur in an aerobic environment, complex II acts as a succinate dehydrogenase by transferring electrons from succinate to ubiquinone. The polypeptide is Succinate dehydrogenase [ubiquinone] cytochrome b small subunit 2 (Ascaris suum (Pig roundworm)).